A 420-amino-acid chain; its full sequence is Reticulon-4 receptor-like 2 (420 aa).

The N-terminal stretch at 1-46 (MLPGLRRLLQAPASACLLLMLLALPLAAPSCPMLCTCYSSPPTVSC) is a signal peptide. 2 disulfide bridges follow: C31/C37 and C35/C46. The LRRNT domain maps to 47–60 (QANNFSSVPLSLPP). N-linked (GlcNAc...) asparagine glycosylation occurs at N50. LRR repeat units lie at residues 61–82 (STQR…TFGS), 83–104 (NLLT…TFRH), 107–129 (ALEE…TFQG), 132–153 (RLQS…IFRG), 156–177 (SLQY…LFAD), 180–201 (NLSH…VFRG), 204–225 (SLDR…AFRG), and 228–249 (RLTI…ALAD). An N-linked (GlcNAc...) asparagine glycan is attached at N93. N236 is a glycosylation site (N-linked (GlcNAc...) asparagine). In terms of domain architecture, LRRCT spans 261 to 312 (NPWACDCRARPLWAWFQRARVSSSDVTCATPPERQGRDLRALREADFQACPP). Cystine bridges form between C265-C288 and C267-C310. The segment at 308–399 (QACPPAAPTR…CQAPPDSRGP (92 aa)) is disordered. Positions 315–327 (PTRPGSRARGNSS) are important for interaction with MAG. A compositionally biased stretch (basic and acidic residues) spans 351 to 360 (LPAEDSRGRQ). C390 is lipidated: GPI-anchor amidated cysteine. The propeptide at 391 to 420 (QAPPDSRGPALSAGLPSPLLCLLLLVPHHL) is removed in mature form.

Belongs to the Nogo receptor family. As to quaternary structure, interaction with MAG is controversial, and may be indirect. Does not interact with MAG, OMG and RTN4. Interacts with MAG. Undergoes zinc metalloproteinase-mediated ectodomain shedding in neuroblastoma cells; is released both as a full-length ectodomain and an N-terminal fragment containing the leucine-rich repeat (LRR) region of the protein. In terms of processing, N-glycosylated. Highly expressed in brain and liver. Expressed at lower levels in kidney, mammary gland, placenta, skeletal muscle, spleen and thyroid.

It localises to the cell membrane. The protein localises to the membrane raft. Its subcellular location is the cell projection. It is found in the dendrite. The protein resides in the perikaryon. It localises to the axon. Cell surface receptor that plays a functionally redundant role in the inhibition of neurite outgrowth mediated by MAG. Plays a functionally redundant role in postnatal brain development. Contributes to normal axon migration across the brain midline and normal formation of the corpus callosum. Does not seem to play a significant role in regulating axon regeneration in the adult central nervous system. Protects motoneurons against apoptosis; protection against apoptosis is probably mediated by MAG. Like other family members, plays a role in restricting the number dendritic spines and the number of synapses that are formed during brain development. Signaling mediates activation of Rho and downstream reorganization of the actin cytoskeleton. The sequence is that of Reticulon-4 receptor-like 2 from Homo sapiens (Human).